The primary structure comprises 336 residues: Zinc finger protein GFI1 homolog pag-3 (336 aa).

5 C2H2-type zinc fingers span residues 126–148 (FHCQ…QQVH), 154–176 (FECK…LLIH), 182–204 (YPCE…TYIH), 210–232 (HKCT…TRKH), and 238–260 (FACD…RESH). The interval 253-290 (RRRHRESHHPGHPEECVSASQISSDLSPKGYMTPPTSN) is disordered.

May interact with transcription factor unc-3. In terms of tissue distribution, expressed in the BDU neurons, the touch neurons, the VA, VB and VC motor neurons, two AVF interneurons and unidentified neurons of the retrovesicular ganglion (at protein level).

Its subcellular location is the nucleus. It localises to the cell projection. The protein localises to the axon. The protein resides in the perikaryon. Functionally, transcription factor. Plays a role in the determination of neuroblast cell fate and neuronal differentiation. Negatively modulates expression of several components of dense-core vesicles (DCVs), thereby, in a DCV membrane protein ida-1-dependent manner, regulating neurosecretion. Negatively modulates the transcription of its own gene, the mechanosensory gene mec-3, and also other touch neuron-specific genes in the BDU neurons; required for coordinated movement. Required to determine the identity of BDU sensory neurons in concert with transcription factor unc-86, regulating expression of a number of genes, including transcription factors ceh-14 and ahr-1, neuropeptides flp-10, nlp-1 and nlp-15, and tyramine receptor-encoding ser-2. Acts in concert with non-canonical WNT signaling to negatively modulate transcription of mec-3 gene in BDU neurons. May act in concert with transcription factor unc-3 in motor neuron fate determination. May play a role programmed cell death. This is Zinc finger protein GFI1 homolog pag-3 from Caenorhabditis elegans.